A 205-amino-acid polypeptide reads, in one-letter code: Small ribosomal subunit protein uS4 (205 aa).

A disordered region spans residues 26-46 (PVNRREYGPGQHGQRRKQKPS). One can recognise an S4 RNA-binding domain in the interval 94 to 157 (RRLDAVVYRL…KQLAIVLDAV (64 aa)).

This sequence belongs to the universal ribosomal protein uS4 family. Part of the 30S ribosomal subunit. Contacts protein S5. The interaction surface between S4 and S5 is involved in control of translational fidelity.

One of the primary rRNA binding proteins, it binds directly to 16S rRNA where it nucleates assembly of the body of the 30S subunit. Functionally, with S5 and S12 plays an important role in translational accuracy. This Gluconobacter oxydans (strain 621H) (Gluconobacter suboxydans) protein is Small ribosomal subunit protein uS4.